Consider the following 529-residue polypeptide: MGTIIQFLVVSCLLAGAGSLDPAALMQIGVIPTNVRQLMYYTEASSAFIVVKLMPTIDSPISGCNITSISSYNATVTKLLQPIGENLETIRNQLIPTRRRRRFAGVVIGLAALGVATAAQVTAAVALVKANENAAAILNLKNAIQKTNAAVADVVQATQSLGTAVQAVQDHINSVVSPAITAANCKAQDAIIGSILNLYLTELTTIFHNQITNPALSPITIQALRILLGSTLPTVVEKSFNTQISAAELLSSGLLTGQIVGLDLTYMQMVIKIELPTLTVQPATQIIDLATISAFINNQEVMAQLPTRVMVTGSLIQAYPASQCTITPNTVYCRYNDAQVLSDDTMACLQGNLTRCTFSPVVGSFLTRFVLFDGIVYANCRSMLCKCMQPAAVILQPSSSPVTVIDMYKCVSLQLDNLRFTITQLANVTYNSTIKLESSQILSIDPLDISQNLAAVNKSLSDALQHLAQSDTYLSAITSATTTSVLSIIAICLGSLGLILIILLSVVVWKLLTIVVANRNRMENFVYHK.

Residues 1-19 form the signal peptide; it reads MGTIIQFLVVSCLLAGAGS. The Extracellular segment spans residues 20-487; sequence LDPAALMQIG…TSATTTSVLS (468 aa). 5 disulfide bridges follow: Cys64–Cys185, Cys324–Cys333, Cys348–Cys356, Cys380–Cys385, and Cys387–Cys410. Residues Asn65 and Asn73 are each glycosylated (N-linked (GlcNAc...) asparagine; by host). Residues 103–127 form a fusion peptide region; sequence FAGVVIGLAALGVATAAQVTAAVAL. Positions 128–156 form a coiled coil; the sequence is VKANENAAAILNLKNAIQKTNAAVADVVQ. Asn352 carries N-linked (GlcNAc...) asparagine; by host glycosylation. N-linked (GlcNAc...) asparagine; by host glycans are attached at residues Asn427, Asn431, and Asn457. The stretch at 452–477 forms a coiled coil; it reads NLAAVNKSLSDALQHLAQSDTYLSAI. The chain crosses the membrane as a helical span at residues 488-508; the sequence is IIAICLGSLGLILIILLSVVV. The Cytoplasmic portion of the chain corresponds to 509 to 529; the sequence is WKLLTIVVANRNRMENFVYHK.

It belongs to the paramyxoviruses fusion glycoprotein family. Homotrimer of disulfide-linked F1-F2. The inactive precursor F0 is glycosylated and proteolytically cleaved into F1 and F2 to be functionally active. The cleavage is mediated by cellular proteases during the transport and maturation of the polypeptide.

It localises to the virion membrane. The protein resides in the host cell membrane. In terms of biological role, class I viral fusion protein. Under the current model, the protein has at least 3 conformational states: pre-fusion native state, pre-hairpin intermediate state, and post-fusion hairpin state. During viral and plasma cell membrane fusion, the heptad repeat (HR) regions assume a trimer-of-hairpins structure, positioning the fusion peptide in close proximity to the C-terminal region of the ectodomain. The formation of this structure appears to drive apposition and subsequent fusion of viral and plasma cell membranes. Directs fusion of viral and cellular membranes leading to delivery of the nucleocapsid into the cytoplasm. This fusion is pH independent and occurs directly at the outer cell membrane. The trimer of F1-F2 (F protein) probably interacts with HN at the virion surface. Upon HN binding to its cellular receptor, the hydrophobic fusion peptide is unmasked and interacts with the cellular membrane, inducing the fusion between cell and virion membranes. Later in infection, F proteins expressed at the plasma membrane of infected cells could mediate fusion with adjacent cells to form syncytia, a cytopathic effect that could lead to tissue necrosis. This is Fusion glycoprotein F0 (F) from Parainfluenza virus 5 (strain W3) (PIV5).